The sequence spans 429 residues: MYVEIVDVRAREVLDSRGNPTVEAEVVLEDGTMGRAIVPSGASTGKFEALEIRDKDKKRYLGKGVLKAVENVNETIAPALIGMNAFDQPLVDKTLIELDGTENKSKLGANAILAVSMAVARAAANYLGLPLYKYLGGVNAKVLPVPLMNVINGGQHADNNLDLQEFMIVPAGFDSFREALRAGAEIFHTLKKILHEAGHVTAVGDEGGFAPNLSSNEEAIKVLIEAIEKAGYKPGEEVFIALDCAASSFYDEEKGVYYVDGEEKSSEVLMGYYEELVAKYPIISIEDPFAEEDWDAFVEFTKRVGNKVQIVGDDLYVTNVKRLSKGIELKATNSILIKLNQIGTVTETLDAVEMAQKNNMTAIISHRSGESEDTFIADLAVATNAGFIKTGSLSRSERTAKYNQLLRIEEELGKVAEFRGLKSFYSIKR.

Q164 is a (2R)-2-phosphoglycerate binding site. The Proton donor role is filled by E206. Residues D243, E286, and D313 each coordinate Mg(2+). Positions 338, 367, 368, and 389 each coordinate (2R)-2-phosphoglycerate. Catalysis depends on K338, which acts as the Proton acceptor.

It belongs to the enolase family. Mg(2+) is required as a cofactor.

The protein localises to the cytoplasm. The protein resides in the secreted. It is found in the cell surface. The enzyme catalyses (2R)-2-phosphoglycerate = phosphoenolpyruvate + H2O. It functions in the pathway carbohydrate degradation; glycolysis; pyruvate from D-glyceraldehyde 3-phosphate: step 4/5. In terms of biological role, catalyzes the reversible conversion of 2-phosphoglycerate (2-PG) into phosphoenolpyruvate (PEP). It is essential for the degradation of carbohydrates via glycolysis. The protein is Enolase of Thermotoga sp. (strain RQ2).